A 375-amino-acid chain; its full sequence is Oleosin-B6 (375 aa).

The interval M1–K32 is polar. The next 3 helical transmembrane spans lie at F21–F43, A55–A75, and L81–M101. A hydrophobic region spans residues V33–A112. 2 disordered regions span residues P144–S284 and I303–S375. A compositionally biased stretch (basic and acidic residues) spans K148–S179. Residues N193–P210 are compositionally biased toward pro residues. Repeat copies occupy residues P207–A209, P210–A212, P213–A215, P216–A218, P219–A221, P222–A224, P225–A227, P228–A230, P231–A233, P234–A236, P237–D239, P240–A242, P243–A245, P246–A248, P249–T251, P252–A254, P255–A257, P258–A260, A261–A263, P264–A266, P267–A269, P270–A272, and P273–A275. The tract at residues P207 to A275 is 23 X 3 AA approximate tandem repeats of P-A-A. A compositionally biased stretch (low complexity) spans A211–T251. The segment covering P252–P280 has biased composition (pro residues). The span at S316–R331 shows a compositional bias: basic residues.

Belongs to the oleosin family. In terms of tissue distribution, the full-length protein is found in the tapetal lipid bodies of immature anthers, the proteolytically cleaved C-terminal product is found on the coats of pollen grains. Not found in flowers, developing embryos or leaf tissue.

The protein resides in the lipid droplet. It is found in the membrane. In terms of biological role, many of the major pollen coat proteins are derived from endoproteolytic cleavage of oleosin-like proteins. The polypeptide is Oleosin-B6 (Brassica napus (Rape)).